Consider the following 94-residue polypeptide: Co-chaperonin GroES (94 aa).

This sequence belongs to the GroES chaperonin family. In terms of assembly, heptamer of 7 subunits arranged in a ring. Interacts with the chaperonin GroEL.

Its subcellular location is the cytoplasm. In terms of biological role, together with the chaperonin GroEL, plays an essential role in assisting protein folding. The GroEL-GroES system forms a nano-cage that allows encapsulation of the non-native substrate proteins and provides a physical environment optimized to promote and accelerate protein folding. GroES binds to the apical surface of the GroEL ring, thereby capping the opening of the GroEL channel. In Caldanaerobacter subterraneus subsp. tengcongensis (strain DSM 15242 / JCM 11007 / NBRC 100824 / MB4) (Thermoanaerobacter tengcongensis), this protein is Co-chaperonin GroES.